The sequence spans 335 residues: Transaldolase (335 aa).

K135 serves as the catalytic Schiff-base intermediate with substrate.

Belongs to the transaldolase family. Type 1 subfamily. As to quaternary structure, homodimer.

The protein resides in the cytoplasm. The catalysed reaction is D-sedoheptulose 7-phosphate + D-glyceraldehyde 3-phosphate = D-erythrose 4-phosphate + beta-D-fructose 6-phosphate. Its pathway is carbohydrate degradation; pentose phosphate pathway; D-glyceraldehyde 3-phosphate and beta-D-fructose 6-phosphate from D-ribose 5-phosphate and D-xylulose 5-phosphate (non-oxidative stage): step 2/3. Its function is as follows. Transaldolase is important for the balance of metabolites in the pentose-phosphate pathway. This Prochlorococcus marinus (strain SARG / CCMP1375 / SS120) protein is Transaldolase.